A 127-amino-acid chain; its full sequence is Fluoride-specific ion channel FluC (127 aa).

4 helical membrane-spanning segments follow: residues 2–22 (LSSLLAVFIGGGMGSVLRWAI), 35–55 (LGTLAVNLLGGFIIGLAIAIF), 68–88 (LITTGFCGGLTTFSTFSLEVV), and 104–124 (LLNLAGSLVMTLLAFMLVVWI). Na(+)-binding residues include Gly-75 and Thr-78.

It belongs to the fluoride channel Fluc/FEX (TC 1.A.43) family.

It is found in the cell inner membrane. The catalysed reaction is fluoride(in) = fluoride(out). Its activity is regulated as follows. Na(+) is not transported, but it plays an essential structural role and its presence is essential for fluoride channel function. In terms of biological role, fluoride-specific ion channel. Important for reducing fluoride concentration in the cell, thus reducing its toxicity. This Serratia proteamaculans (strain 568) protein is Fluoride-specific ion channel FluC.